We begin with the raw amino-acid sequence, 446 residues long: Histidine--tRNA ligase (446 aa).

The protein belongs to the class-II aminoacyl-tRNA synthetase family. As to quaternary structure, homodimer.

It is found in the cytoplasm. The enzyme catalyses tRNA(His) + L-histidine + ATP = L-histidyl-tRNA(His) + AMP + diphosphate + H(+). In Paraburkholderia phytofirmans (strain DSM 17436 / LMG 22146 / PsJN) (Burkholderia phytofirmans), this protein is Histidine--tRNA ligase.